We begin with the raw amino-acid sequence, 124 residues long: Small ribosomal subunit protein uS12 (124 aa).

3-methylthioaspartic acid is present on Asp89.

It belongs to the universal ribosomal protein uS12 family. Part of the 30S ribosomal subunit. Contacts proteins S8 and S17. May interact with IF1 in the 30S initiation complex.

Its function is as follows. With S4 and S5 plays an important role in translational accuracy. In terms of biological role, interacts with and stabilizes bases of the 16S rRNA that are involved in tRNA selection in the A site and with the mRNA backbone. Located at the interface of the 30S and 50S subunits, it traverses the body of the 30S subunit contacting proteins on the other side and probably holding the rRNA structure together. The combined cluster of proteins S8, S12 and S17 appears to hold together the shoulder and platform of the 30S subunit. This chain is Small ribosomal subunit protein uS12, found in Acinetobacter baumannii (strain AB307-0294).